The following is a 430-amino-acid chain: Cell wall protein ECM33 (430 aa).

The first 19 residues, 1 to 19 (MQFKNALTATAILSASALA), serve as a signal peptide directing secretion. 12 N-linked (GlcNAc...) asparagine glycosylation sites follow: asparagine 22, asparagine 57, asparagine 83, asparagine 197, asparagine 210, asparagine 228, asparagine 235, asparagine 242, asparagine 268, asparagine 280, asparagine 305, and asparagine 329. Residue serine 340 is modified to Phosphoserine. Residues 362–402 (LSSTSTESSKSSATSSASSSGDASNAQASVSASASSSSSSS) show a composition bias toward low complexity. The tract at residues 362 to 411 (LSSTSTESSKSSATSSASSSGDASNAQASVSASASSSSSSSKKSKGAAPE) is disordered. The GPI-anchor amidated glycine moiety is linked to residue glycine 407. Residues 408–430 (AAPELVPATSFMGVVAAVAVALL) constitute a propeptide, removed in mature form.

This sequence belongs to the SPS2 family. In terms of processing, the GPI-anchor is attached to the protein in the endoplasmic reticulum and serves to target the protein to the cell surface. There, the glucosamine-inositol phospholipid moiety is cleaved off and the GPI-modified mannoprotein is covalently attached via its lipidless GPI glycan remnant to the 1,6-beta-glucan of the outer cell wall layer.

The protein localises to the cell membrane. The protein resides in the secreted. It localises to the cell wall. Its function is as follows. Required for proper cell wall integrity and for the correct assembly of the mannoprotein outer layer of the cell wall. Important for apical bud growth. This Saccharomyces cerevisiae (strain JAY291) (Baker's yeast) protein is Cell wall protein ECM33 (ECM33).